The following is a 1185-amino-acid chain: Ovostatin homolog 1 (1185 aa).

Positions 1-21 are cleaved as a signal peptide; sequence MHVHVCVCLCVCIYTSSCVCA. 5 N-linked (GlcNAc...) asparagine glycosylation sites follow: Asn80, Asn155, Asn347, Asn452, and Asn725.

The protein belongs to the protease inhibitor I39 (alpha-2-macroglobulin) family. In terms of assembly, homotetramer.

Its subcellular location is the secreted. Functionally, is able to inhibit all four classes of proteinases by a unique 'trapping' mechanism. The sequence is that of Ovostatin homolog 1 (OVOS1) from Homo sapiens (Human).